A 289-amino-acid polypeptide reads, in one-letter code: Carbonyl reductase [NADPH] 1 (289 aa).

The residue at position 2 (S2) is an N-acetylserine. S2 is modified (phosphoserine). NADP(+) contacts are provided by residues 10 to 34, 63 to 64, and N90; these read VTGANKGIGFAIVRDLCRQFAGDVV and DI. Residues 95 to 97 and Q106 contribute to the glutathione site; that span reads FQL. S140 lines the substrate pocket. 193 to 194 contacts glutathione; it reads TY. Y194 serves as the catalytic Proton acceptor. Residues 194-198 and 231-233 each bind NADP(+); these read YGVTK and VRT. The residue at position 239 (K239) is an N6-1-carboxyethyl lysine.

This sequence belongs to the short-chain dehydrogenases/reductases (SDR) family. In terms of assembly, monomer. In terms of tissue distribution, expressed in kidney (at protein level).

Its subcellular location is the cytoplasm. The enzyme catalyses a secondary alcohol + NADP(+) = a ketone + NADPH + H(+). It catalyses the reaction prostaglandin E1 + NADP(+) = 15-oxoprostaglandin E1 + NADPH + H(+). The catalysed reaction is prostaglandin F2alpha + NADP(+) = prostaglandin E2 + NADPH + H(+). It carries out the reaction prostaglandin D2 + NADP(+) = 15-oxoprostaglandin D2 + NADPH + H(+). The enzyme catalyses prostaglandin E2 + NADP(+) = 15-oxoprostaglandin E2 + NADPH + H(+). It catalyses the reaction prostaglandin F2alpha + NADP(+) = 15-oxoprostaglandin F2alpha + NADPH + H(+). The catalysed reaction is menadione + NADPH + H(+) = menadiol + NADP(+). It carries out the reaction daunorubicin + NADPH + H(+) = 13-dihydrodaunorubicin + NADP(+). The enzyme catalyses S-nitrosoglutathione + NADPH + H(+) = S-(hydroxysulfenamide)glutathione + NADP(+). It catalyses the reaction a primary alcohol + NADP(+) = an aldehyde + NADPH + H(+). The catalysed reaction is cortisol + NADPH + H(+) = 20beta-dihydrocortisol + NADP(+). It carries out the reaction corticosterone + NADPH + H(+) = 20beta-dihydrocorticosterone + NADP(+). Functionally, NADPH-dependent reductase with broad substrate specificity. Catalyzes the reduction of a wide variety of carbonyl compounds including quinones, prostaglandins, menadione, plus various xenobiotics. Catalyzes the reduction of the antitumor anthracyclines doxorubicin and daunorubicin to the cardiotoxic compounds doxorubicinol and daunorubicinol. Can convert prostaglandin E2 to prostaglandin F2-alpha. Can bind glutathione, which explains its higher affinity for glutathione-conjugated substrates. Catalyzes the reduction of S-nitrosoglutathione. In addition, participates in the glucocorticoid metabolism by catalyzing the NADPH-dependent cortisol/corticosterone into 20beta-dihydrocortisol (20b-DHF) or 20beta-corticosterone (20b-DHB), which are weak agonists of NR3C1 and NR3C2 in adipose tissue. This Sus scrofa (Pig) protein is Carbonyl reductase [NADPH] 1.